The sequence spans 147 residues: Large ribosomal subunit protein uL11 (147 aa).

The protein belongs to the universal ribosomal protein uL11 family. In terms of assembly, part of the ribosomal stalk of the 50S ribosomal subunit. Interacts with L10 and the large rRNA to form the base of the stalk. L10 forms an elongated spine to which L12 dimers bind in a sequential fashion forming a multimeric L10(L12)X complex. In terms of processing, one or more lysine residues are methylated.

In terms of biological role, forms part of the ribosomal stalk which helps the ribosome interact with GTP-bound translation factors. The sequence is that of Large ribosomal subunit protein uL11 from Bacteroides fragilis (strain ATCC 25285 / DSM 2151 / CCUG 4856 / JCM 11019 / LMG 10263 / NCTC 9343 / Onslow / VPI 2553 / EN-2).